We begin with the raw amino-acid sequence, 486 residues long: Ribosomal RNA small subunit methyltransferase F (486 aa).

S-adenosyl-L-methionine contacts are provided by residues 124-130 (ASAPGSK), Glu-148, Asp-175, and Asp-193. Catalysis depends on Cys-246, which acts as the Nucleophile.

The protein belongs to the class I-like SAM-binding methyltransferase superfamily. RsmB/NOP family.

The protein resides in the cytoplasm. It carries out the reaction cytidine(1407) in 16S rRNA + S-adenosyl-L-methionine = 5-methylcytidine(1407) in 16S rRNA + S-adenosyl-L-homocysteine + H(+). In terms of biological role, specifically methylates the cytosine at position 1407 (m5C1407) of 16S rRNA. This is Ribosomal RNA small subunit methyltransferase F from Shewanella baltica (strain OS223).